The sequence spans 433 residues: sn-glycerol-3-phosphate-binding periplasmic protein UgpB (433 aa).

A signal peptide spans methionine 1 to alanine 25. Positions 67, 91, 146, 273, 307, 346, and 397 each coordinate sn-glycerol 3-phosphate.

The protein belongs to the bacterial solute-binding protein 1 family. The complex is composed of two ATP-binding proteins (UgpC), two transmembrane proteins (UgpA and UgpE) and a solute-binding protein (UgpB).

Its subcellular location is the periplasm. Part of the ABC transporter complex UgpBAEC involved in sn-glycerol-3-phosphate (G3P) import. Binds G3P. In Brucella abortus (strain 2308), this protein is sn-glycerol-3-phosphate-binding periplasmic protein UgpB (ugpB).